The primary structure comprises 129 residues: uncharacterized protein (129 aa).

This sequence belongs to the asfivirus C129R family.

The protein localises to the virion. Functionally, plays a role in the inhibition of type I interferon signaling pathway. Mechanistically, specifically interacts with 2',3'-cGAMP and cleaves it via its phosphodiesterase activity. In turn, prevents 2',3'-cGAMP interaction with host ER-resident STING1 leading to inhibition of downstream signaling pathway and type I interferon production. This is an uncharacterized protein from Ornithodoros (relapsing fever ticks).